Reading from the N-terminus, the 550-residue chain is Chaperonin GroEL (550 aa).

ATP contacts are provided by residues threonine 30 to proline 33, lysine 51, aspartate 87 to threonine 91, glycine 415, asparagine 480 to alanine 482, and aspartate 496.

It belongs to the chaperonin (HSP60) family. In terms of assembly, forms a cylinder of 14 subunits composed of two heptameric rings stacked back-to-back. Interacts with the co-chaperonin GroES.

It is found in the cytoplasm. The catalysed reaction is ATP + H2O + a folded polypeptide = ADP + phosphate + an unfolded polypeptide.. Together with its co-chaperonin GroES, plays an essential role in assisting protein folding. The GroEL-GroES system forms a nano-cage that allows encapsulation of the non-native substrate proteins and provides a physical environment optimized to promote and accelerate protein folding. The sequence is that of Chaperonin GroEL from Variovorax paradoxus (strain S110).